A 143-amino-acid polypeptide reads, in one-letter code: MVKPDGVQRGLVGEVIQRFERRGYKLVAIKMMHASEQLLQTHYEALKSLSFFPKLVAYMSSGPVVPMVFEGRKVVENGRTMLGATKPEASCPGSIRGDYCQDVGRNVVHGSDSTESANREINLWFSPQELCQYKQAVDPWIHE.

The region spanning 1–132 (MVKPDGVQRG…LWFSPQELCQ (132 aa)) is the NDPK-like domain. ADP-binding residues include K3, F51, R79, T85, R96, V103, and N106. 5 residues coordinate ATP: K3, F51, R79, T85, and R96. An ATP-binding site is contributed by N106. The active-site Pros-phosphohistidine intermediate is H109.

Belongs to the NDK family. As to quaternary structure, homohexamer. Mg(2+) serves as cofactor.

The catalysed reaction is a 2'-deoxyribonucleoside 5'-diphosphate + ATP = a 2'-deoxyribonucleoside 5'-triphosphate + ADP. It catalyses the reaction a ribonucleoside 5'-diphosphate + ATP = a ribonucleoside 5'-triphosphate + ADP. The enzyme catalyses GDP + ATP = GTP + ADP. Its pathway is purine metabolism; purine nucleotide biosynthesis. In terms of biological role, major role in the synthesis of nucleoside triphosphates other than ATP. The ATP gamma phosphate is transferred to the NDP beta phosphate via a ping-pong mechanism, using a phosphorylated active-site intermediate. The chain is Nucleoside diphosphate kinase from Schistosoma mansoni (Blood fluke).